Here is a 445-residue protein sequence, read N- to C-terminus: C4-dicarboxylate transport protein 2 (445 aa).

A run of 8 helical transmembrane segments spans residues 24–44 (ILYV…WLFP), 62–82 (LIKM…IAHI), 96–116 (LVYF…VGNL), 163–183 (GDIL…MALG), 201–221 (FGVI…AMAF), 237–257 (LIAL…GLIA), 334–354 (ALGV…AMLT), and 366–386 (FITL…GMAI).

Belongs to the dicarboxylate/amino acid:cation symporter (DAACS) (TC 2.A.23) family.

It localises to the cell inner membrane. In terms of biological role, responsible for the transport of dicarboxylates such as succinate, fumarate, and malate from the periplasm across the membrane. This Bradyrhizobium sp. (strain ORS 278) protein is C4-dicarboxylate transport protein 2.